Reading from the N-terminus, the 876-residue chain is SED5-binding protein 2 (876 aa).

At Ser-51 the chain carries Phosphoserine. Positions 164–189 are zinc finger-like; it reads CRRCRSYMNPFVVFINQGRKWQCNIC. The segment covering 300 to 324 has biased composition (acidic residues); it reads VSDEDDEESDGEEEDEDEEEEDVDN. The segment at 300-326 is disordered; the sequence is VSDEDDEESDGEEEDEDEEEEDVDNSE.

The protein belongs to the SEC23/SEC24 family. SEC24 subfamily. In terms of assembly, COPII is composed of at least five proteins: the SEC23/24 complex, the SEC13/31 complex and SAR1. Interacts with GRH1.

Its subcellular location is the cytoplasm. The protein resides in the golgi apparatus membrane. It is found in the endoplasmic reticulum membrane. In terms of biological role, component of the COPII coat, that covers ER-derived vesicles involved in transport from the endoplasmic reticulum to the Golgi apparatus. COPII acts in the cytoplasm to promote the transport of secretory, plasma membrane, and vacuolar proteins from the endoplasmic reticulum to the Golgi complex. The chain is SED5-binding protein 2 (SFB2) from Saccharomyces cerevisiae (strain ATCC 204508 / S288c) (Baker's yeast).